Reading from the N-terminus, the 72-residue chain is DNA-directed RNA polymerase subunit omega (72 aa).

Belongs to the RNA polymerase subunit omega family. The RNAP catalytic core consists of 2 alpha, 1 beta, 1 beta' and 1 omega subunit. When a sigma factor is associated with the core the holoenzyme is formed, which can initiate transcription.

The catalysed reaction is RNA(n) + a ribonucleoside 5'-triphosphate = RNA(n+1) + diphosphate. Functionally, promotes RNA polymerase assembly. Latches the N- and C-terminal regions of the beta' subunit thereby facilitating its interaction with the beta and alpha subunits. This chain is DNA-directed RNA polymerase subunit omega, found in Staphylococcus aureus (strain Mu3 / ATCC 700698).